The following is a 349-amino-acid chain: Small ribosomal subunit protein uS2 (349 aa).

It belongs to the universal ribosomal protein uS2 family.

The chain is Small ribosomal subunit protein uS2 from Methylobacterium sp. (strain 4-46).